The following is a 146-amino-acid chain: Hemoglobin subunit beta (146 aa).

Residues 2–146 (HWSAEEKQLI…VAHALARKYH (145 aa)) form the Globin domain. Residues His63 and His92 each coordinate heme b.

This sequence belongs to the globin family. As to quaternary structure, heterotetramer of two alpha chains and two beta chains. In terms of tissue distribution, red blood cells.

Its function is as follows. Involved in oxygen transport from the lung to the various peripheral tissues. The sequence is that of Hemoglobin subunit beta (HBB) from Columba livia (Rock dove).